A 1358-amino-acid polypeptide reads, in one-letter code: MAPPETGDELVFFVNGKKVVEKDVDPETTLLTYLRRKLGLCGTKLGCGEGGCGACTVMISKYDPFQKKILHHTANACLFPICALHHVAVTTVEGIGNTKSRLHPAQERIAKSHGSQCGFCTPGIVMSMYTLLRNKPKPKMEDIEDAFQGNLCRCTGYRPILEGYRTFAVDSNCCGKAANGTGCCHSKGENSMNGGCCGGKANGPGCCMNEKENVTMMSSSLFDSSEFQPLDPTQEPIFPPELMTQRNKEQKQVCFKGERVMWIQPTTLQELVALKSQYPNAKLVVGNTEVGIEMRLKNMLYPVILAPAWIPEMNAVQQTETGITFGAACTLSSVEEVLRKAVAELPSYKTEIFQAALEQLRWFAGPQIRNVAALGGNIMTASPISDLNPVLMASGSKLTLISMEGKRTVMMDEKFFTGYRKTIVKPEEVLLSVEIPYSKEGEYFSAFKQAYRREDDIAIVTCGMRVLFQHGTSRVQEVKLSYGGMAPTTILALKTCRELAGRDWNEKLLQDACRLLAGEMDLSPSAPGGMVEFRRTLTLSFFFKFYLTVLQKLSKDQNGPNNLCEPVPPNYISATELFHKDPIASTQLFQEVPRGQLVEDTVGRPLVHLSAAKQACGEAVYCDDIPHYENELYLTLVTSTQAHAKILSIDASEAQSVPGFVCFVSAKDVPGSNITGIANDETVFAEDVVTCVGHIIGAVIADTQEHSRRAAKAVKIKYEELKPIVTIQEAIEQQSFIKPIKRIKKGDVNKGFEESDHILEGEMHIGGQEHFYLETHCTLAVPKGEDGEMELFVSTQNLMKTQEFTASALGVPSNRIVVRVKRMGGGFGGKETRNTILTTVVAVAAFKTGRPVRCMLDRDEDMLISGGRHPFLGRYKVGFMKNGKIKSLEVSYYSNGGNSADLSHGVMDRALLHLDNSYNIPNVSIMGFICKTNLSSNTAFRGFGGPQGMMIAECWMSDLARKCGLPPEEVRKINLYHEGDLTHFNQKLEGFTLRRCWDECLSSSNYHARKKLIEEFNKQNRWKKRGMCIIPTKFGISFTVPFLNQAGALVHVYTDGSVLLTHGGTEMGQGLHTKMIQVASRSLGIPTSKIYISETSTNTVPNTSPTAASVSADINGMAVHNACQTILKRLEPIKQSNLKGSWEDWIKTAYENCISLSATGFYRIPDVGYNFETNKGKPFHYFSYGVACSEVEIDCLTGDHKNIRTDIVMDVGTSLNPAIDIGQIEGAFVQGIGLFTMEELRYSPEGNLYTRGPGMYKIPAFGDIPTEFYVSLLRDCPNSKAIYSSKAVGEPPLFLSASVFYAIKDAIYSAREDSGVTEPFRLDSPATPERIRNACVDTFTKMCPSAEPGTFKPWSVRA.

The 2Fe-2S ferredoxin-type domain occupies 8 to 95 (DELVFFVNGK…HVAVTTVEGI (88 aa)). [2Fe-2S] cluster contacts are provided by cysteine 47, cysteine 52, cysteine 55, cysteine 77, cysteine 117, cysteine 120, cysteine 152, and cysteine 154. The FAD-binding PCMH-type domain occupies 255 to 440 (FKGERVMWIQ…LSVEIPYSKE (186 aa)). Residues 283–290 (LVVGNTEV), phenylalanine 363, 373–377 (ALGGN), aspartate 386, leucine 430, and lysine 448 each bind FAD. 2 residues coordinate Mo-molybdopterin: glutamine 796 and phenylalanine 827. The substrate site is built by glutamate 831 and arginine 909. Arginine 941 contacts Mo-molybdopterin. Residues phenylalanine 943 and threonine 1039 each coordinate substrate. Residue alanine 1108 coordinates Mo-molybdopterin. Catalysis depends on glutamate 1290, which acts as the Proton acceptor.

This sequence belongs to the xanthine dehydrogenase family. As to quaternary structure, homodimer. The cofactor is FAD. Mo-molybdopterin serves as cofactor. Requires [2Fe-2S] cluster as cofactor. As to expression, detected in liver (at protein level).

The protein localises to the peroxisome. The protein resides in the cytoplasm. The enzyme catalyses xanthine + NAD(+) + H2O = urate + NADH + H(+). The catalysed reaction is hypoxanthine + NAD(+) + H2O = xanthine + NADH + H(+). It catalyses the reaction xanthine + O2 + H2O = urate + H2O2. In terms of biological role, key enzyme in purine degradation. Catalyzes the oxidation of hypoxanthine to xanthine. Catalyzes the oxidation of xanthine to uric acid. Contributes to the generation of reactive oxygen species. In Gallus gallus (Chicken), this protein is Xanthine dehydrogenase/oxidase (XDH).